A 177-amino-acid polypeptide reads, in one-letter code: Large ribosomal subunit protein uL6 (177 aa).

This sequence belongs to the universal ribosomal protein uL6 family. In terms of assembly, part of the 50S ribosomal subunit.

This protein binds to the 23S rRNA, and is important in its secondary structure. It is located near the subunit interface in the base of the L7/L12 stalk, and near the tRNA binding site of the peptidyltransferase center. This chain is Large ribosomal subunit protein uL6, found in Serratia proteamaculans (strain 568).